The primary structure comprises 160 residues: SsrA-binding protein (160 aa).

This sequence belongs to the SmpB family.

The protein resides in the cytoplasm. Required for rescue of stalled ribosomes mediated by trans-translation. Binds to transfer-messenger RNA (tmRNA), required for stable association of tmRNA with ribosomes. tmRNA and SmpB together mimic tRNA shape, replacing the anticodon stem-loop with SmpB. tmRNA is encoded by the ssrA gene; the 2 termini fold to resemble tRNA(Ala) and it encodes a 'tag peptide', a short internal open reading frame. During trans-translation Ala-aminoacylated tmRNA acts like a tRNA, entering the A-site of stalled ribosomes, displacing the stalled mRNA. The ribosome then switches to translate the ORF on the tmRNA; the nascent peptide is terminated with the 'tag peptide' encoded by the tmRNA and targeted for degradation. The ribosome is freed to recommence translation, which seems to be the essential function of trans-translation. In Salmonella arizonae (strain ATCC BAA-731 / CDC346-86 / RSK2980), this protein is SsrA-binding protein.